The sequence spans 89 residues: UPF0147 protein TV0625 (89 aa).

This sequence belongs to the UPF0147 family.

In Thermoplasma volcanium (strain ATCC 51530 / DSM 4299 / JCM 9571 / NBRC 15438 / GSS1), this protein is UPF0147 protein TV0625.